A 469-amino-acid chain; its full sequence is 3-isopropylmalate dehydratase large subunit (469 aa).

Positions 350, 410, and 413 each coordinate [4Fe-4S] cluster.

The protein belongs to the aconitase/IPM isomerase family. LeuC type 1 subfamily. Heterodimer of LeuC and LeuD. [4Fe-4S] cluster is required as a cofactor.

It catalyses the reaction (2R,3S)-3-isopropylmalate = (2S)-2-isopropylmalate. It functions in the pathway amino-acid biosynthesis; L-leucine biosynthesis; L-leucine from 3-methyl-2-oxobutanoate: step 2/4. Its function is as follows. Catalyzes the isomerization between 2-isopropylmalate and 3-isopropylmalate, via the formation of 2-isopropylmaleate. This is 3-isopropylmalate dehydratase large subunit from Chelativorans sp. (strain BNC1).